Reading from the N-terminus, the 1895-residue chain is 1,3-beta-glucan synthase component GSC2 (1895 aa).

2 stretches are compositionally biased toward polar residues: residues Met-1 to Gly-16 and Pro-25 to Ser-34. 2 disordered regions span residues Met-1 to Asn-143 and Ala-269 to Leu-292. Topologically, residues Met-1–Arg-473 are extracellular. Low complexity predominate over residues Gln-65–Pro-78. Composition is skewed to polar residues over residues Tyr-79–Ser-107 and Thr-115–Tyr-141. A compositionally biased stretch (basic residues) spans Ala-269–Lys-278. A Glycyl lysine isopeptide (Lys-Gly) (interchain with G-Cter in ubiquitin) cross-link involves residue Lys-278. Thr-288 and Thr-291 each carry phosphothreonine. Lys-405 participates in a covalent cross-link: Glycyl lysine isopeptide (Lys-Gly) (interchain with G-Cter in ubiquitin). The helical transmembrane segment at Ile-474–Tyr-494 threads the bilayer. The Cytoplasmic segment spans residues Thr-495–Lys-511. Residues Trp-512–Cys-532 traverse the membrane as a helical segment. The Extracellular portion of the chain corresponds to Glu-533–Arg-550. The chain crosses the membrane as a helical span at residues Phe-551 to Tyr-571. Residues Asp-572 to His-582 lie on the Cytoplasmic side of the membrane. The chain crosses the membrane as a helical span at residues Val-583–Pro-603. Residues Leu-604–Leu-1579 are Extracellular-facing. Residues Lys-929, Lys-934, Lys-1558, and Lys-1566 each participate in a glycyl lysine isopeptide (Lys-Gly) (interchain with G-Cter in ubiquitin) cross-link. Residues Ile-1580 to Phe-1600 traverse the membrane as a helical segment. Residues Ile-1601–Arg-1620 are Cytoplasmic-facing. A helical transmembrane segment spans residues Ile-1621–Gly-1641. Over Leu-1642–Glu-1758 the chain is Extracellular. A helical transmembrane segment spans residues Phe-1759 to Ile-1779. Over Pro-1780–Ser-1821 the chain is Cytoplasmic. The helical transmembrane segment at Leu-1822–Ala-1842 threads the bilayer. Residues His-1843 to Lys-1895 are Extracellular-facing.

It belongs to the glycosyltransferase 48 family. As to quaternary structure, component of the 1,3-beta-glucan synthase (GS) complex, composed of two alternate catalytic subunits FKS1 or GSC2, and a regulatory subunit RHO1. Interacts with SMK1.

Its subcellular location is the membrane. The catalysed reaction is [(1-&gt;3)-beta-D-glucosyl](n) + UDP-alpha-D-glucose = [(1-&gt;3)-beta-D-glucosyl](n+1) + UDP + H(+). Its function is as follows. Alternate catalytic subunit of the 1,3-beta-glucan synthase (GS) complex. Synthesizes 1,3-beta-glucan, a major structural component of the yeast cell wall. Required for spore wall assembly. Negative regulation of activity by SMK1 is important for spore wall deposition. Activity is positively regulated by RHO1. The sequence is that of 1,3-beta-glucan synthase component GSC2 from Saccharomyces cerevisiae (strain ATCC 204508 / S288c) (Baker's yeast).